Reading from the N-terminus, the 119-residue chain is Large ribosomal subunit protein bL20 (119 aa).

The protein belongs to the bacterial ribosomal protein bL20 family.

Binds directly to 23S ribosomal RNA and is necessary for the in vitro assembly process of the 50S ribosomal subunit. It is not involved in the protein synthesizing functions of that subunit. The polypeptide is Large ribosomal subunit protein bL20 (Saccharophagus degradans (strain 2-40 / ATCC 43961 / DSM 17024)).